The primary structure comprises 305 residues: tRNA pseudouridine synthase B (305 aa).

Catalysis depends on Asp48, which acts as the Nucleophile.

This sequence belongs to the pseudouridine synthase TruB family. Type 1 subfamily.

The catalysed reaction is uridine(55) in tRNA = pseudouridine(55) in tRNA. In terms of biological role, responsible for synthesis of pseudouridine from uracil-55 in the psi GC loop of transfer RNAs. The polypeptide is tRNA pseudouridine synthase B (Pseudomonas fluorescens (strain ATCC BAA-477 / NRRL B-23932 / Pf-5)).